Consider the following 248-residue polypeptide: Ribonuclease PH (248 aa).

Phosphate contacts are provided by residues Arg86 and 124–126 (GTR).

The protein belongs to the RNase PH family. As to quaternary structure, homohexameric ring arranged as a trimer of dimers.

The catalysed reaction is tRNA(n+1) + phosphate = tRNA(n) + a ribonucleoside 5'-diphosphate. Phosphorolytic 3'-5' exoribonuclease that plays an important role in tRNA 3'-end maturation. Removes nucleotide residues following the 3'-CCA terminus of tRNAs; can also add nucleotides to the ends of RNA molecules by using nucleoside diphosphates as substrates, but this may not be physiologically important. Probably plays a role in initiation of 16S rRNA degradation (leading to ribosome degradation) during starvation. This chain is Ribonuclease PH, found in Listeria welshimeri serovar 6b (strain ATCC 35897 / DSM 20650 / CCUG 15529 / CIP 8149 / NCTC 11857 / SLCC 5334 / V8).